Here is a 258-residue protein sequence, read N- to C-terminus: Tryptophan synthase alpha chain (258 aa).

Active-site proton acceptor residues include glutamate 47 and aspartate 58.

This sequence belongs to the TrpA family. Tetramer of two alpha and two beta chains.

The catalysed reaction is (1S,2R)-1-C-(indol-3-yl)glycerol 3-phosphate + L-serine = D-glyceraldehyde 3-phosphate + L-tryptophan + H2O. It participates in amino-acid biosynthesis; L-tryptophan biosynthesis; L-tryptophan from chorismate: step 5/5. Functionally, the alpha subunit is responsible for the aldol cleavage of indoleglycerol phosphate to indole and glyceraldehyde 3-phosphate. This is Tryptophan synthase alpha chain from Bacillus cereus (strain ATCC 14579 / DSM 31 / CCUG 7414 / JCM 2152 / NBRC 15305 / NCIMB 9373 / NCTC 2599 / NRRL B-3711).